A 58-amino-acid polypeptide reads, in one-letter code: uncharacterized protein (58 aa).

It is found in the mitochondrion. This is an uncharacterized protein from Saccharomyces cerevisiae (strain ATCC 204508 / S288c) (Baker's yeast).